A 196-amino-acid chain; its full sequence is MKVGVVGLQGDVSEHIEATKMAIEKLELPGEVIWLKRPEQLKGVDAVIIPGGESTTISRLMQRTGLFEPIKKMVEDGLPVMGTCAGLIMLAKEVLGATPEQKFLEVLDVKVNRNAYGRQVDSFEAPVKLAFDDEPFIGVFIRAPRIVELLSEKVKPLAWLEDRVVGVEQENIIGLEFHPELTNDTRIHEYFLRKVI.

52–54 (GES) serves as a coordination point for L-glutamine. C84 functions as the Nucleophile in the catalytic mechanism. Residues R113 and 141 to 142 (IR) contribute to the L-glutamine site. Catalysis depends on charge relay system residues H178 and E180.

The protein belongs to the glutaminase PdxT/SNO family. In terms of assembly, in the presence of PdxS, forms a dodecamer of heterodimers. Only shows activity in the heterodimer.

The catalysed reaction is aldehydo-D-ribose 5-phosphate + D-glyceraldehyde 3-phosphate + L-glutamine = pyridoxal 5'-phosphate + L-glutamate + phosphate + 3 H2O + H(+). The enzyme catalyses L-glutamine + H2O = L-glutamate + NH4(+). It participates in cofactor biosynthesis; pyridoxal 5'-phosphate biosynthesis. Catalyzes the hydrolysis of glutamine to glutamate and ammonia as part of the biosynthesis of pyridoxal 5'-phosphate. The resulting ammonia molecule is channeled to the active site of PdxS. This chain is Pyridoxal 5'-phosphate synthase subunit PdxT, found in Pyrococcus horikoshii (strain ATCC 700860 / DSM 12428 / JCM 9974 / NBRC 100139 / OT-3).